A 563-amino-acid chain; its full sequence is Eukaryotic translation initiation factor 3 subunit D-1 (563 aa).

The disordered stretch occupies residues 98–136 (VQKPPHQRGRFRNMRGRGGRGRNPRGGLNNHHHHGMTTL). The segment covering 100-120 (KPPHQRGRFRNMRGRGGRGRN) has biased composition (basic residues). The segment at 291 to 305 (EFDLLTVNESSVEPP) is RNA gate.

The protein belongs to the eIF-3 subunit D family. As to quaternary structure, component of the eukaryotic translation initiation factor 3 (eIF-3) complex. The eIF-3 complex interacts with pix.

It is found in the cytoplasm. Functionally, mRNA cap-binding component of the eukaryotic translation initiation factor 3 (eIF-3) complex, which is involved in protein synthesis of a specialized repertoire of mRNAs and, together with other initiation factors, stimulates binding of mRNA and methionyl-tRNAi to the 40S ribosome. The eIF-3 complex specifically targets and initiates translation of a subset of mRNAs involved in cell proliferation. In the eIF-3 complex, eif3d specifically recognizes and binds the 7-methylguanosine cap of a subset of mRNAs. The chain is Eukaryotic translation initiation factor 3 subunit D-1 from Drosophila pseudoobscura pseudoobscura (Fruit fly).